A 556-amino-acid chain; its full sequence is MKSDVEIAQSATMQHINHIAEKLGLTVDQIEQYGKYKAKINPADAFKLPAKNGKLILVTAINPTPAGEGKTTVTIGLTDALNHIGKQAVVAAREPSLGPVFGVKGGAAGGGYAQVLPMEDINLHFTGDFHAITSANNLLAALLDNHIYQGNALNIDPKRILWRRVIDMNDRQLRNILGGLGNTTDGVIRPDGFDITVASEVMAIFCLAKDLADLKTRLGNILVAYTKDKQPVYAKDLNAQGAMAALLKDAIKPNLVQTMAGSPAFIHGGPFANIAHGCNSVIATRLALHLGDYAVTEAGFGADLGAEKFCDIKCRLAELKPDVAVIVATVRALKYNGGVEKANLAEENLEALTEGLPNLLKHIANLKNVLGLPVVVALNRFVSDSDAELALIQTACAKQGVEVSLTEVWARSAVGGVDLAHKVLKAIDEQQNNFQFAYDVNDRIQHKITAIAQKIYGATDVNFSAEALAEIKNLEKLALDKLPICMAKTQYSLSDSAKLLGCPTGFNITVRSITVSAGAGFIVAICGSIMRMPGLPKNPATNRIDVDENGVISGLF.

64 to 71 (TPAGEGKT) is a binding site for ATP.

The protein belongs to the formate--tetrahydrofolate ligase family.

It catalyses the reaction (6S)-5,6,7,8-tetrahydrofolate + formate + ATP = (6R)-10-formyltetrahydrofolate + ADP + phosphate. It functions in the pathway one-carbon metabolism; tetrahydrofolate interconversion. The chain is Formate--tetrahydrofolate ligase from Haemophilus ducreyi (strain 35000HP / ATCC 700724).